Consider the following 525-residue polypeptide: Bifunctional purine biosynthesis protein PurH (525 aa).

One can recognise an MGS-like domain in the interval 1-149 (MSDPVIKRAL…KNNESVTVVT (149 aa)).

Belongs to the PurH family.

It catalyses the reaction (6R)-10-formyltetrahydrofolate + 5-amino-1-(5-phospho-beta-D-ribosyl)imidazole-4-carboxamide = 5-formamido-1-(5-phospho-D-ribosyl)imidazole-4-carboxamide + (6S)-5,6,7,8-tetrahydrofolate. The enzyme catalyses IMP + H2O = 5-formamido-1-(5-phospho-D-ribosyl)imidazole-4-carboxamide. It participates in purine metabolism; IMP biosynthesis via de novo pathway; 5-formamido-1-(5-phospho-D-ribosyl)imidazole-4-carboxamide from 5-amino-1-(5-phospho-D-ribosyl)imidazole-4-carboxamide (10-formyl THF route): step 1/1. Its pathway is purine metabolism; IMP biosynthesis via de novo pathway; IMP from 5-formamido-1-(5-phospho-D-ribosyl)imidazole-4-carboxamide: step 1/1. This Prosthecochloris aestuarii (strain DSM 271 / SK 413) protein is Bifunctional purine biosynthesis protein PurH.